Reading from the N-terminus, the 661-residue chain is UvrABC system protein B (661 aa).

The region spanning 25 to 182 (AGLSSKKRSQ…NDLINLQYER (158 aa)) is the Helicase ATP-binding domain. ATP is bound at residue 38–45 (GITGSGKT). The Beta-hairpin signature appears at 91–114 (YYDYYQPEAYIARTDTFIEKDSSI). The Helicase C-terminal domain occupies 430-592 (QVEDLISEIQ…IIPKTINRAI (163 aa)). One can recognise a UVR domain in the interval 621-656 (KTHIDKLKKEMLKAASNLEFEQAVKLRDQLKTLEEA).

This sequence belongs to the UvrB family. As to quaternary structure, forms a heterotetramer with UvrA during the search for lesions. Interacts with UvrC in an incision complex.

It localises to the cytoplasm. The UvrABC repair system catalyzes the recognition and processing of DNA lesions. A damage recognition complex composed of 2 UvrA and 2 UvrB subunits scans DNA for abnormalities. Upon binding of the UvrA(2)B(2) complex to a putative damaged site, the DNA wraps around one UvrB monomer. DNA wrap is dependent on ATP binding by UvrB and probably causes local melting of the DNA helix, facilitating insertion of UvrB beta-hairpin between the DNA strands. Then UvrB probes one DNA strand for the presence of a lesion. If a lesion is found the UvrA subunits dissociate and the UvrB-DNA preincision complex is formed. This complex is subsequently bound by UvrC and the second UvrB is released. If no lesion is found, the DNA wraps around the other UvrB subunit that will check the other stand for damage. In Rickettsia rickettsii (strain Sheila Smith), this protein is UvrABC system protein B.